We begin with the raw amino-acid sequence, 400 residues long: Diphosphomevalonate decarboxylase (400 aa).

(R)-5-diphosphomevalonate contacts are provided by residues 19–22 (YWGK), R75, 154–159 (SGSACR), and T210. The interval 381 to 400 (DGPRTLGPEEALLSPDGLPK) is disordered.

It belongs to the diphosphomevalonate decarboxylase family.

It carries out the reaction (R)-5-diphosphomevalonate + ATP = isopentenyl diphosphate + ADP + phosphate + CO2. Its pathway is isoprenoid biosynthesis; isopentenyl diphosphate biosynthesis via mevalonate pathway; isopentenyl diphosphate from (R)-mevalonate: step 3/3. In terms of biological role, diphosphomevalonate decarboxylase; part of the second module of ergosterol biosynthesis pathway that includes the middle steps of the pathway. The second module involves the formation of farnesyl diphosphate, which is also an important intermediate in the biosynthesis of ubiquinone, dolichol, heme and prenylated proteins. This module also plays a key role in the biosynthesis of triterpenes such as ganoderic acids (GA), a group of highly oxygenated lanostane-type triterpenoids which are well recognized as a main group of unique bioactive compounds in the medicinal mushroom Ganoderma lucidum. Activity by the mevalonate kinase first converts mevalonate into 5-phosphomevalonate. 5-phosphomevalonate is then further converted to 5-diphosphomevalonate by the phosphomevalonate kinase. The diphosphomevalonate decarboxylase MVD then produces isopentenyl diphosphate. The isopentenyl-diphosphate delta-isomerase then catalyzes the 1,3-allylic rearrangement of the homoallylic substrate isopentenyl (IPP) to its highly electrophilic allylic isomer, dimethylallyl diphosphate (DMAPP). Finally the farnesyl diphosphate synthase FPS catalyzes the sequential condensation of isopentenyl pyrophosphate with dimethylallyl pyrophosphate, and then with the resultant geranylpyrophosphate to the ultimate product farnesyl pyrophosphate. This Ganoderma lucidum (Ling zhi medicinal fungus) protein is Diphosphomevalonate decarboxylase.